The following is a 329-amino-acid chain: BRISC and BRCA1-A complex member 1 (329 aa).

Met1 carries the N-acetylmethionine modification. The segment at 1–84 (MEVAEPSSPT…VPPPAPEVQI (84 aa)) is disordered. Phosphoserine is present on Ser8. Residues 10-19 (TEEEEEEEEH) show a composition bias toward acidic residues. Phosphoserine is present on residues Ser29, Ser49, Ser57, and Ser62. A Phosphothreonine modification is found at Thr65. Ser66 carries the phosphoserine modification. The tract at residues 95–298 (VIICLDLSEE…LELHNCMAKL (204 aa)) is VWFA-like.

The protein belongs to the BABAM1 family. In terms of assembly, component of the ARISC complex, at least composed of UIMC1/RAP80, ABRAXAS1, BRCC3/BRCC36, BABAM2 and BABAM1/NBA1. Component of the BRCA1-A complex, at least composed of BRCA1, BARD1, UIMC1/RAP80, ABRAXAS1, BRCC3/BRCC36, BABAM2 and BABAM1/NBA1. In the BRCA1-A complex, interacts directly with ABRAXAS1 and BABAM2. Component of the BRISC complex, at least composed of ABRAXAS2, BRCC3/BRCC36, BABAM2 and BABAM1/NBA1. Identified in a complex with SHMT2 and the other subunits of the BRISC complex.

It localises to the cytoplasm. It is found in the nucleus. Its function is as follows. Component of the BRCA1-A complex, a complex that specifically recognizes 'Lys-63'-linked ubiquitinated histones H2A and H2AX at DNA lesions sites, leading to target the BRCA1-BARD1 heterodimer to sites of DNA damage at double-strand breaks (DSBs). The BRCA1-A complex also possesses deubiquitinase activity that specifically removes 'Lys-63'-linked ubiquitin on histones H2A and H2AX. In the BRCA1-A complex, it is required for the complex integrity and its localization at DSBs. Component of the BRISC complex, a multiprotein complex that specifically cleaves 'Lys-63'-linked ubiquitin in various substrates. In these 2 complexes, it is probably required to maintain the stability of BABAM2 and help the 'Lys-63'-linked deubiquitinase activity mediated by BRCC3/BRCC36 component. The BRISC complex is required for normal mitotic spindle assembly and microtubule attachment to kinetochores via its role in deubiquitinating NUMA1. Plays a role in interferon signaling via its role in the deubiquitination of the interferon receptor IFNAR1; deubiquitination increases IFNAR1 activity by enhancing its stability and cell surface expression. Down-regulates the response to bacterial lipopolysaccharide (LPS) via its role in IFNAR1 deubiquitination. The chain is BRISC and BRCA1-A complex member 1 (BABAM1) from Homo sapiens (Human).